We begin with the raw amino-acid sequence, 1281 residues long: Protein ETHYLENE-INSENSITIVE 2 (1281 aa).

Over 1 to 21 the chain is Cytoplasmic; it reads MDGQQLRSSESPASGGGGVTG. A helical transmembrane segment spans residues 22-42; that stretch reads GGAPHLFHALGPALLISIGYI. Residues 43-61 lie on the Extracellular side of the membrane; that stretch reads DLGKWVAAVEAGSRFGLDL. A helical membrane pass occupies residues 62–82; it reads VLLALLFNFMAILCQYLAACI. Over 83–112 the chain is Cytoplasmic; it reads GTVTGRSLAEICHQEYSRPTCIFLGVQAGL. A helical transmembrane segment spans residues 113–133; sequence SLLTSELTMIFGIALGFNLLF. At 134 to 137 the chain is on the extracellular side; that stretch reads EYDD. Residues 138–158 form a helical membrane-spanning segment; it reads LITGICFATVVPNLLPYAISH. Residues 159–163 are Cytoplasmic-facing; it reads LGKKM. A helical membrane pass occupies residues 164–184; it reads VGTLNACIAGFALLCYVLGLL. Topologically, residues 185–208 are extracellular; sequence VSQPQIPLTTNVIFPKLSGESAYS. A helical membrane pass occupies residues 209-229; sequence LMALLGANVMAHNFYIHSSVV. Over 230–238 the chain is Cytoplasmic; the sequence is QGQKRSAFA. The chain crosses the membrane as a helical span at residues 239–259; sequence VGALFHDHLFSVLFIFTGIFL. Over 260 to 297 the chain is Extracellular; it reads VNHVLMNSAAADSTNTLLLTFQDVVELMNQIFVNPMAP. A helical transmembrane segment spans residues 298-318; that stretch reads TIFLVVLLFSSHIISLTSAIG. Topologically, residues 319–325 are cytoplasmic; it reads SQVISQH. Residues 326–346 traverse the membrane as a helical segment; sequence LFGINLPLSGHHLILKAFAIV. Residues 347–362 are Extracellular-facing; sequence PALYCAKVAGAEGIYQ. Residues 363–383 form a helical membrane-spanning segment; that stretch reads LLIICQIIQAMLLPSSVVPLF. Over 384 to 400 the chain is Cytoplasmic; sequence RVASSRLIMGAHRVSLH. The helical transmembrane segment at 401 to 421 threads the bilayer; that stretch reads LEILTFLAFLLMLFSNIIFMA. Residues 422–447 lie on the Extracellular side of the membrane; sequence EMLFGDSGWLNTLKGNTGSPVVFPST. Residues 448–468 traverse the membrane as a helical segment; that stretch reads VLITVACVSVAFSLYMAVTPL. The Cytoplasmic portion of the chain corresponds to 469–1281; the sequence is KSGSHEAELQ…KRRLSSKGQQ (813 aa). Disordered regions lie at residues 540–565 and 593–665; these read IESDHDSQHSTAHTSTAPESCHSPSF and ESTV…NGSG. A compositionally biased stretch (polar residues) spans 548–557; it reads HSTAHTSTAP. A compositionally biased stretch (basic and acidic residues) spans 599-610; it reads VDSKSTGERDIE.

It belongs to the NRAMP (TC 2.A.55) family. As to expression, expressed in roots, leaf sheaths, leaf blades, flowers, developing seeds, germinating seeds and young seedlings. Expressed in adventitious roots, vascular tissues of the seminal roots, lateral roots, the connecting region between vascular tissues and lateral roots, mature leaf, mature stem, tips of adventitious roots derived from the node, shoot apex, young panicle, anthers, pistil, stigma, ovary, seed coat and fruit coat pericarp.

It localises to the membrane. In terms of biological role, central factor in ethylene signaling pathways that control development, senescence and grain size. Acts as a positive component of the ethylene-signaling pathway. This Oryza sativa subsp. japonica (Rice) protein is Protein ETHYLENE-INSENSITIVE 2.